We begin with the raw amino-acid sequence, 125 residues long: Translation initiation factor 5A (125 aa).

Position 36 is a hypusine (Lys-36).

This sequence belongs to the eIF-5A family.

It localises to the cytoplasm. Functions by promoting the formation of the first peptide bond. The polypeptide is Translation initiation factor 5A (eIF5A) (Halorubrum lacusprofundi (strain ATCC 49239 / DSM 5036 / JCM 8891 / ACAM 34)).